Here is a 395-residue protein sequence, read N- to C-terminus: ATP synthase subunit a (395 aa).

5 helical membrane passes run 153–173 (FTNPSLFMLLTLSLVLLLVYF), 246–266 (HFLITLGLSFSIFIGITIVGF), 273–293 (FLSFLLPAGVPLPLAPFLVLL), 313–333 (MMAGHSSVKILSGFAWTMLCM), and 339–359 (FIGDLGPLFIVLALTGLELGV).

It belongs to the ATPase A chain family. As to quaternary structure, F-type ATPases have 2 components, CF(1) - the catalytic core - and CF(0) - the membrane proton channel. CF(1) has five subunits: alpha(3), beta(3), gamma(1), delta(1), epsilon(1). CF(0) has three main subunits: a, b and c.

Its subcellular location is the mitochondrion inner membrane. Functionally, mitochondrial membrane ATP synthase (F(1)F(0) ATP synthase or Complex V) produces ATP from ADP in the presence of a proton gradient across the membrane which is generated by electron transport complexes of the respiratory chain. F-type ATPases consist of two structural domains, F(1) - containing the extramembraneous catalytic core and F(0) - containing the membrane proton channel, linked together by a central stalk and a peripheral stalk. During catalysis, ATP synthesis in the catalytic domain of F(1) is coupled via a rotary mechanism of the central stalk subunits to proton translocation. Key component of the proton channel; it may play a direct role in the translocation of protons across the membrane. This is ATP synthase subunit a (ATP6) from Nicotiana tabacum (Common tobacco).